Consider the following 284-residue polypeptide: 4-diphosphocytidyl-2-C-methyl-D-erythritol kinase (284 aa).

Residue Lys14 is part of the active site. 98–108 (PMGGGLGGGSS) contacts ATP. Residue Asp140 is part of the active site.

The protein belongs to the GHMP kinase family. IspE subfamily.

The catalysed reaction is 4-CDP-2-C-methyl-D-erythritol + ATP = 4-CDP-2-C-methyl-D-erythritol 2-phosphate + ADP + H(+). The protein operates within isoprenoid biosynthesis; isopentenyl diphosphate biosynthesis via DXP pathway; isopentenyl diphosphate from 1-deoxy-D-xylulose 5-phosphate: step 3/6. Its function is as follows. Catalyzes the phosphorylation of the position 2 hydroxy group of 4-diphosphocytidyl-2C-methyl-D-erythritol. This is 4-diphosphocytidyl-2-C-methyl-D-erythritol kinase from Shewanella denitrificans (strain OS217 / ATCC BAA-1090 / DSM 15013).